The chain runs to 64 residues: Short neurotoxin 1 (64 aa).

Cystine bridges form between cysteine 3–cysteine 26, cysteine 20–cysteine 43, cysteine 45–cysteine 56, and cysteine 57–cysteine 62.

The protein belongs to the three-finger toxin family. Short-chain subfamily. Type I alpha-neurotoxin sub-subfamily. As to expression, expressed by the venom gland.

The protein resides in the secreted. Its function is as follows. Binds to muscle nicotinic acetylcholine receptor (nAChR) and inhibit acetylcholine from binding to the receptor, thereby impairing neuromuscular transmission. The chain is Short neurotoxin 1 from Bungarus fasciatus (Banded krait).